Reading from the N-terminus, the 73-residue chain is Ocellatin-PT7 (73 aa).

An N-terminal signal peptide occupies residues 1 to 22; that stretch reads MAFLKKSLFLVLFLGLVSLSIC. The propeptide occupies 23-39; the sequence is DEEKRQDEDDDDDDDEE.

Expressed by the skin glands.

The protein localises to the secreted. In terms of biological role, has antibacterial activity against Gram-negative bacteria E.coli ATCC 25922 (MIC=60 uM) and S.choleraesuis ATCC 14028 (MIC=240 uM) and against Gram-positive bacterium S.aureus ATCC 29313 (MIC=240 uM). Shows no hemolytic activity and no cytotoxicity. In Leptodactylus pustulatus (Ceara white-lipped frog), this protein is Ocellatin-PT7.